The following is a 209-amino-acid chain: Chaperone protein TorD (209 aa).

This sequence belongs to the TorD/DmsD family. TorD subfamily.

The protein localises to the cytoplasm. In terms of biological role, involved in the biogenesis of TorA. Acts on TorA before the insertion of the molybdenum cofactor and, as a result, probably favors a conformation of the apoenzyme that is competent for acquiring the cofactor. The polypeptide is Chaperone protein TorD (Shewanella massilia).